The primary structure comprises 492 residues: Probable malate:quinone oxidoreductase 1 (492 aa).

Belongs to the MQO family. The cofactor is FAD.

It catalyses the reaction (S)-malate + a quinone = a quinol + oxaloacetate. It functions in the pathway carbohydrate metabolism; tricarboxylic acid cycle; oxaloacetate from (S)-malate (quinone route): step 1/1. In Staphylococcus epidermidis (strain ATCC 12228 / FDA PCI 1200), this protein is Probable malate:quinone oxidoreductase 1.